Reading from the N-terminus, the 303-residue chain is HTH-type transcriptional regulator LinR (303 aa).

Residues 6-63 (LDFRHLVLLDALLKRHSVSAAARELDLPQPTASHGLARLRKALGDPLLVRARDGMEPT) enclose the HTH lysR-type domain. Positions 23–42 (VSAAARELDLPQPTASHGLA) form a DNA-binding region, H-T-H motif.

Belongs to the LysR transcriptional regulatory family.

In terms of biological role, positively regulates the transcription of the linD and linE genes that are involved in gamma-hexachlorocyclohexane (gamma-HCH or lindane) degradation. This degradation pathway allows S.japonicum UT26 to grow on gamma-HCH as the sole source of carbon and energy. The polypeptide is HTH-type transcriptional regulator LinR (linR) (Sphingobium indicum (strain DSM 16413 / CCM 7287 / MTCC 6362 / UT26 / NBRC 101211 / UT26S) (Sphingobium japonicum)).